We begin with the raw amino-acid sequence, 878 residues long: Alanine--tRNA ligase (878 aa).

Residues His-562, His-566, Cys-670, and His-674 each coordinate Zn(2+).

The protein belongs to the class-II aminoacyl-tRNA synthetase family. Zn(2+) is required as a cofactor.

It is found in the cytoplasm. It carries out the reaction tRNA(Ala) + L-alanine + ATP = L-alanyl-tRNA(Ala) + AMP + diphosphate. Functionally, catalyzes the attachment of alanine to tRNA(Ala) in a two-step reaction: alanine is first activated by ATP to form Ala-AMP and then transferred to the acceptor end of tRNA(Ala). Also edits incorrectly charged Ser-tRNA(Ala) and Gly-tRNA(Ala) via its editing domain. In Acinetobacter baylyi (strain ATCC 33305 / BD413 / ADP1), this protein is Alanine--tRNA ligase.